A 344-amino-acid chain; its full sequence is Interactor of constitutive active ROPs 1 (344 aa).

Disordered stretches follow at residues 1–74 (MPRP…ESQL), 92–139 (EAVK…KETD), 186–218 (HESL…DEMV), and 307–344 (FMDP…KGQK). Residues 19-29 (SSSSTSDSNHS) show a composition bias toward low complexity. Positions 60–108 (QKKLGGRISDLESQLGQAQEELRLLKEQLANAEAVKKQAQDELHKKSKK) form a coiled coil. Composition is skewed to basic and acidic residues over residues 93–103 (AVKKQAQDELH), 114–139 (RVEE…KETD), and 186–195 (HESLGKENES). Residues 145–273 (VEKIAVEEEE…EQWRKAADAA (129 aa)) are a coiled coil. Residues 196 to 211 (LKNQLSDSASEISNVK) are compositionally biased toward polar residues.

It belongs to the ICR family. Homooligomer. Interacts with ARAC3, ARAC4, ARAC8, ARAC11 and SEC3A, but not with ICR2 or EXO70A1. Expressed in mature and germinating pollen. Expressed throughout the embryo but not in the hypophysis and quiescent center (QC). In roots, absent from the QC and the stem cells.

Its subcellular location is the cell membrane. The protein localises to the nucleus. Acts as a scaffold, mediating interaction of ROPs with different proteins. Required for primary and adventitious root maintenance, but not for their formation. Promotes the stabilization of ARAC11 on the plasma membrane of the pollen tube initiation site but not the activation of ARAC11. Regulates directionality of polar auxin transport, and is required for the formation of a stable auxin maximum and tip localized auxin gradient during embryogenesis, organogenesis, and meristem activity. Involved in exocytosis and in the recycling of PIN proteins back to the plasma membrane. This is Interactor of constitutive active ROPs 1 (ICR1) from Arabidopsis thaliana (Mouse-ear cress).